Here is a 572-residue protein sequence, read N- to C-terminus: Asparagine--tRNA ligase, cytoplasmic 1 (572 aa).

At Ala-2 the chain carries N-acetylalanine. The OB DNA-binding region spans 53 to 131; the sequence is VRIGGWVKSG…QQIELNVVKV (79 aa). The WHEP-TRS domain occupies 236–292; the sequence is DVEAARLIVIERGNVVAELKAAKASKEAITAAVAELKIAKETFAHIDERSRLRPGLP.

Belongs to the class-II aminoacyl-tRNA synthetase family.

The protein resides in the cytoplasm. Its subcellular location is the cytosol. The catalysed reaction is tRNA(Asn) + L-asparagine + ATP = L-asparaginyl-tRNA(Asn) + AMP + diphosphate + H(+). This chain is Asparagine--tRNA ligase, cytoplasmic 1, found in Arabidopsis thaliana (Mouse-ear cress).